A 78-amino-acid chain; its full sequence is MLIKVKTLTGKEIELDIDPNDKVSRIKERVEEKEGIPPSQQRLIYAGKQMADDKNAESYHLEGGSVLHLVLALRGGSC.

Belongs to the ubiquitin family.

The sequence is that of Ubiquitin-like protein 1 (ubl1) from Schizosaccharomyces pombe (strain 972 / ATCC 24843) (Fission yeast).